Here is a 702-residue protein sequence, read N- to C-terminus: MPLEMFMFATTRMALLIGGAIGGATFPLFAQETTKNDTVIVTSPVQSGATKLATPDIETPQSVSIITRQQFEEQGATSVRQAVSYTPGVYSNQIGASNRFDYIVLRGFSDGSLDNVYLDGLKMMGDTNSHSSLVVDPWFLEDIEVVRGPASVLYGRSSPGGIVALTSRKPAFDAGGEVKLFAGNNNQRGAAFDVTGPLDDNERVAARLSGMTRYADSQFTPLKEERYALMPSLTWRITDRTRLDLMAYLHRDPEGGSHSGLPYQGTVVPYNGGKISNTFFEGEDDYDKYDRRENMVGYNIEHLFDNGWSVRQKLRYLHTKVTLNQVYAAGWLNETALNRGYSGSGEKMSAIALDNQLDGSVDTGAINHRLLVGIDYQDRSNHTTGYYGAFPPIDAFNPVYGAQPDYITLYSREKHKLRQTGYYLQDQMSWDRWRFTLGGRYDRVSVSNIDKLHDSRSDLDKNNVSTRAALLYLFDNGVAPYLSYSTAFTPTSFADENGNVLEPMKGKQWEAGVKYEPPGGNSQFSAAVYRINQTNIATKEEPTDPYRSIGEIESKGVELEAISHLSDSVRLQAAYTYTDIRYKKSSPQEQGKRAVYAPRNQASAWLSYDVKSGLLEGLTLGSGIRYVNGVTSDRLNTHTLPSYTLVDMVVGYDLSSIGLNGLSAQLNVNNLTDKRYVAACNSLSYCYFGAERSIVGSVSWAF.

The first 30 residues, 1–30, serve as a signal peptide directing secretion; sequence MPLEMFMFATTRMALLIGGAIGGATFPLFA. One can recognise a TBDR plug domain in the interval 55-168; sequence PDIETPQSVS…PGGIVALTSR (114 aa). One can recognise a TBDR beta-barrel domain in the interval 173–702; it reads DAGGEVKLFA…SIVGSVSWAF (530 aa).

The protein belongs to the TonB-dependent receptor family.

It is found in the cell outer membrane. Functionally, ferrioxamine binding and uptake, in association with the TonB protein. May play a role in intestinal colonization. The chain is Ferrioxamine B receptor (foxA) from Salmonella typhimurium (strain SL1344).